The chain runs to 791 residues: Lon protease (791 aa).

Positions 28–223 (LPVVVISEIM…YILQDIQSLL (196 aa)) constitute a Lon N-terminal domain. Residue 374–381 (GPPGVGKT) participates in ATP binding. The 182-residue stretch at 610-791 (KEKIGSTNGL…SDVFSQVFVV (182 aa)) folds into the Lon proteolytic domain. Catalysis depends on residues Ser697 and Lys740.

The protein belongs to the peptidase S16 family. As to quaternary structure, homohexamer. Organized in a ring with a central cavity.

The protein localises to the cytoplasm. It carries out the reaction Hydrolysis of proteins in presence of ATP.. Functionally, ATP-dependent serine protease that mediates the selective degradation of mutant and abnormal proteins as well as certain short-lived regulatory proteins. Required for cellular homeostasis and for survival from DNA damage and developmental changes induced by stress. Degrades polypeptides processively to yield small peptide fragments that are 5 to 10 amino acids long. Binds to DNA in a double-stranded, site-specific manner. The polypeptide is Lon protease (Aster yellows witches'-broom phytoplasma (strain AYWB)).